The sequence spans 640 residues: RecBCD enzyme subunit RecD (640 aa).

194-201 (GGPGTGKT) contributes to the ATP binding site.

The protein belongs to the RecD family. As to quaternary structure, heterotrimer of RecB, RecC and RecD. All subunits contribute to DNA-binding.

It carries out the reaction Couples ATP hydrolysis with the unwinding of duplex DNA at the replication fork by translocating in the 5'-3' direction. This creates two antiparallel DNA single strands (ssDNA). The leading ssDNA polymer is the template for DNA polymerase III holoenzyme which synthesizes a continuous strand.. The enzyme catalyses ATP + H2O = ADP + phosphate + H(+). Its function is as follows. A helicase/nuclease that prepares dsDNA breaks (DSB) for recombinational DNA repair. Binds to DSBs and unwinds DNA via a highly rapid and processive ATP-dependent bidirectional helicase activity. Unwinds dsDNA until it encounters a Chi (crossover hotspot instigator) sequence from the 3' direction. Cuts ssDNA a few nucleotides 3' to the Chi site. The properties and activities of the enzyme are changed at Chi. The Chi-altered holoenzyme produces a long 3'-ssDNA overhang and facilitates RecA-binding to the ssDNA for homologous DNA recombination and repair. Holoenzyme degrades any linearized DNA that is unable to undergo homologous recombination. In the holoenzyme this subunit has ssDNA-dependent ATPase and 5'-3' helicase activity. When added to pre-assembled RecBC greatly stimulates nuclease activity and augments holoenzyme processivity. Negatively regulates the RecA-loading ability of RecBCD. The protein is RecBCD enzyme subunit RecD of Haemophilus influenzae (strain ATCC 51907 / DSM 11121 / KW20 / Rd).